A 156-amino-acid chain; its full sequence is ATP synthase subunit b (156 aa).

A helical transmembrane segment spans residues 11-31 (AIAFVLFVMFCMKFVWPPIMA).

The protein belongs to the ATPase B chain family. F-type ATPases have 2 components, F(1) - the catalytic core - and F(0) - the membrane proton channel. F(1) has five subunits: alpha(3), beta(3), gamma(1), delta(1), epsilon(1). F(0) has three main subunits: a(1), b(2) and c(10-14). The alpha and beta chains form an alternating ring which encloses part of the gamma chain. F(1) is attached to F(0) by a central stalk formed by the gamma and epsilon chains, while a peripheral stalk is formed by the delta and b chains.

The protein resides in the cell inner membrane. In terms of biological role, f(1)F(0) ATP synthase produces ATP from ADP in the presence of a proton or sodium gradient. F-type ATPases consist of two structural domains, F(1) containing the extramembraneous catalytic core and F(0) containing the membrane proton channel, linked together by a central stalk and a peripheral stalk. During catalysis, ATP synthesis in the catalytic domain of F(1) is coupled via a rotary mechanism of the central stalk subunits to proton translocation. Functionally, component of the F(0) channel, it forms part of the peripheral stalk, linking F(1) to F(0). The polypeptide is ATP synthase subunit b (Photorhabdus laumondii subsp. laumondii (strain DSM 15139 / CIP 105565 / TT01) (Photorhabdus luminescens subsp. laumondii)).